A 418-amino-acid chain; its full sequence is Tektin-1 (418 aa).

Coiled coils occupy residues Lys21 to Glu107, His134 to Asp177, Asn266 to Gly308, and Ala333 to Tyr384.

It belongs to the tektin family. In terms of assembly, microtubule inner protein component of sperm flagellar doublet microtubules. Ubiquitinated, leading to its degradation. Deubiquitinated by USP16, promoting its stability. Predominantly expressed in testis. Expressed in airway epithelial cells.

It is found in the cytoplasm. Its subcellular location is the cytoskeleton. The protein resides in the cilium axoneme. The protein localises to the flagellum axoneme. Microtubule inner protein (MIP) part of the dynein-decorated doublet microtubules (DMTs) in cilia and flagellar axoneme. Forms filamentous polymers in the walls of ciliary and flagellar microtubules. This is Tektin-1 (TEKT1) from Homo sapiens (Human).